A 303-amino-acid polypeptide reads, in one-letter code: Ribonuclease HIII (303 aa).

In terms of domain architecture, RNase H type-2 spans 89-303 (WSVLGSDEVG…ANTKKAERLL (215 aa)). Positions 95, 96, and 199 each coordinate a divalent metal cation.

This sequence belongs to the RNase HII family. RnhC subfamily. Requires Mn(2+) as cofactor. It depends on Mg(2+) as a cofactor.

It is found in the cytoplasm. It carries out the reaction Endonucleolytic cleavage to 5'-phosphomonoester.. In terms of biological role, endonuclease that specifically degrades the RNA of RNA-DNA hybrids. This chain is Ribonuclease HIII, found in Leuconostoc mesenteroides subsp. mesenteroides (strain ATCC 8293 / DSM 20343 / BCRC 11652 / CCM 1803 / JCM 6124 / NCDO 523 / NBRC 100496 / NCIMB 8023 / NCTC 12954 / NRRL B-1118 / 37Y).